Consider the following 246-residue polypeptide: Uridylate kinase (246 aa).

Residue 13 to 16 coordinates ATP; that stretch reads KLSG. Gly-54 contributes to the UMP binding site. ATP-binding residues include Gly-55 and Arg-59. UMP-binding positions include Asp-74 and 135–142; that span reads AGMPYFST. Asn-163, Tyr-169, and Asp-172 together coordinate ATP.

This sequence belongs to the UMP kinase family. Homohexamer.

It is found in the cytoplasm. The catalysed reaction is UMP + ATP = UDP + ADP. It participates in pyrimidine metabolism; CTP biosynthesis via de novo pathway; UDP from UMP (UMPK route): step 1/1. With respect to regulation, inhibited by UTP. Its function is as follows. Catalyzes the reversible phosphorylation of UMP to UDP. The sequence is that of Uridylate kinase from Bifidobacterium longum (strain NCC 2705).